We begin with the raw amino-acid sequence, 299 residues long: Nucleotide-binding protein AFE_3021 (299 aa).

11 to 18 contributes to the ATP binding site; sequence GLSGSGKS. 62-65 provides a ligand contact to GTP; the sequence is DVRN.

This sequence belongs to the RapZ-like family.

Functionally, displays ATPase and GTPase activities. In Acidithiobacillus ferrooxidans (strain ATCC 23270 / DSM 14882 / CIP 104768 / NCIMB 8455) (Ferrobacillus ferrooxidans (strain ATCC 23270)), this protein is Nucleotide-binding protein AFE_3021.